A 115-amino-acid chain; its full sequence is ATP-dependent Clp protease adapter protein ClpS (115 aa).

This sequence belongs to the ClpS family. In terms of assembly, binds to the N-terminal domain of the chaperone ClpA.

Involved in the modulation of the specificity of the ClpAP-mediated ATP-dependent protein degradation. This chain is ATP-dependent Clp protease adapter protein ClpS, found in Leptothrix cholodnii (strain ATCC 51168 / LMG 8142 / SP-6) (Leptothrix discophora (strain SP-6)).